We begin with the raw amino-acid sequence, 469 residues long: Transcriptional coactivator YAP1 (469 aa).

The span at 1 to 21 shows a compositional bias: pro residues; the sequence is MEPAQQPPPQPAPQGPAPPSV. A disordered region spans residues 1 to 47; it reads MEPAQQPPPQPAPQGPAPPSVSPAGTPAAPPAPPAGHQVVHVRGDSE. A Phosphoserine modification is found at serine 46. Residue threonine 48 is modified to Phosphothreonine. A coiled-coil region spans residues 71–85; sequence MRLRKLPDSFFKPPE. Lysine 75 bears the N6-lactoyllysine mark. The interval 76–99 is disordered; sequence LPDSFFKPPEPKSHSRQASTDAGT. Phosphoserine occurs at positions 90 and 94. 2 positions are modified to phosphothreonine: threonine 95 and threonine 104. A Phosphoserine; by LATS1 and LATS2 modification is found at serine 112. A phosphoserine mark is found at serine 113 and serine 116. Threonine 136 carries the post-translational modification Phosphothreonine; by MAPK8 and MAPK9. Residue serine 146 is modified to Phosphoserine; by LATS1 and LATS2. WW domains lie at 153–186 and 212–245; these read VPLP…DPRK and GPLP…DPRL. A disordered region spans residues 258-290; it reads SAPVKQPPPLAPQSPQGGVLGGGSSNQQQQIQL. Residues serine 271 and serine 320 each carry the phosphoserine modification. Positions 273–469 are transactivation domain; sequence QGGVLGGGSS…LDKESFLTWL (197 aa). A coiled-coil region spans residues 280–325; it reads GSSNQQQQIQLQQLQMEKERLRLKQQELFRQELALRSQLPSLEQDG. Residue serine 333 is modified to Phosphoserine; by MAPK8 and MAPK9. Positions 345 to 357 are enriched in polar residues; the sequence is TNSSDPFLNSGTY. The interval 345-405 is disordered; it reads TNSSDPFLNS…SQSTLPSQQS (61 aa). Phosphoserine occurs at positions 347, 348, and 354. A Phosphoserine; by LATS1 and LATS2 modification is found at serine 363. Residues 365 to 375 are compositionally biased toward polar residues; sequence DSGLSMSSYSI. Serine 366 and serine 369 each carry phosphoserine; by CK1. Tyrosine 373 is modified (phosphotyrosine; by ABL1). Threonine 378 bears the Phosphothreonine; by MAPK8 and MAPK9 mark. Over residues 393–405 the composition is skewed to polar residues; the sequence is DTISQSTLPSQQS.

The protein belongs to the YAP1 family. Part of a complex when phosphorylated that contains DSG3, PKP1, YAP1 and YWHAG; the complex is required for localization of DSG3 and YAP1 to the cell membrane in keratinocytes. Binds to the SH3 domain of the YES kinase. Binds to WBP1 and WBP2. Binds, in vitro, through the WW1 domain, to neural isoforms of ENAH that contain the PPSY motif. The phosphorylated form interacts with YWHAB. Interacts (via WW domains) with LATS1 (via PPxY motif 2). Interacts with LATS2. Interacts (via WW domain 1) with ERBB4 (via PPxY motif 2). Interacts with TEAD1, TEAD2, TEAD3 and TEAD4. Interacts with TP73. Interacts with RUNX1. Interacts with HCK. Interacts (via WW domains) with PTPN14 (via PPxY motif 2); this interaction leads to the cytoplasmic sequestration of YAP1 and inhibits its transcriptional coactivator activity. Interacts (when phosphorylated at Ser-112) with SMAD2, SMAD3 and WWTR1. Interacts with PRRG2 (via cytoplasmic domain). Interacts (via WW domains) with PRRG4 (via cytoplasmic domain). Interacts (phosphorylated) with CLDN18; the interaction sequesters YAP1 away from the nucleus and thereby restricts transcription of YAP1 target genes. Interacts with SMAD1. Interacts with AMOT; the interaction facilitates translocation of YAP1 to the cytoplasm and tight junctions. Interacts with AMOTL2, the interaction is required for ubiquitination of AMOTL2 and localization of YAP1 to tight junctions. Post-translationally, phosphorylated by LATS1 and LATS2; leading to cytoplasmic translocation and inactivation. Phosphorylated by ABL1; leading to YAP1 stabilization, enhanced interaction with TP73 and recruitment onto proapoptotic genes; in response to DNA damage. Phosphorylation at Ser-366 and Ser-369 by CK1 is triggered by previous phosphorylation at Ser-363 by LATS proteins and leads to YAP1 ubiquitination by SCF(beta-TRCP) E3 ubiquitin ligase and subsequent degradation. Phosphorylated at Thr-104, Thr-136, Ser-333 and Thr-378 by MAPK8/JNK1 and MAPK9/JNK2, which is required for the regulation of apoptosis by YAP1. Lactylation by AARS1 promotes nuclear localization and stabilization of YAP1, leading to increased Hippo signaling pathway. Delactylated by SIRT1. In terms of processing, ubiquitinated by SCF(beta-TRCP) E3 ubiquitin ligase. Highly specific to cortical neurons.

The protein localises to the cytoplasm. It is found in the nucleus. Its subcellular location is the cell junction. It localises to the tight junction. The protein resides in the cell membrane. Transcriptional regulator with dual roles as a coactivator and corepressor. Critical downstream regulatory target in the Hippo signaling pathway, crucial for organ size control and tumor suppression by restricting proliferation and promoting apoptosis. The Hippo signaling pathway core involves a kinase cascade featuring STK3/MST2 and STK4/MST1, along with its regulatory partner SAV1, which phosphorylates and activates LATS1/2 in complex with their regulatory protein, MOB1. This activation leads to the phosphorylation and inactivation of the YAP1 oncoprotein and WWTR1/TAZ. Phosphorylation of YAP1 by LATS1/2 prevents its nuclear translocation, thereby regulating the expression of its target genes. The transcriptional regulation of gene expression requires TEAD transcription factors and modulates cell growth, anchorage-independent growth, and induction of epithelial-mesenchymal transition (EMT). Plays a key role in tissue tension and 3D tissue shape by regulating the cortical actomyosin network, acting via ARHGAP18, a Rho GTPase activating protein that suppresses F-actin polymerization. It also suppresses ciliogenesis by acting as a transcriptional corepressor of TEAD4 target genes AURKA and PLK1. In conjunction with WWTR1, regulates TGFB1-dependent SMAD2 and SMAD3 nuclear accumulation. Synergizes with WBP2 to enhance PGR activity. In terms of biological role, attenuates p73-mediated cell death signaling in transcriptional repression-induced atypical death (TRIAD) of neurons. The chain is Transcriptional coactivator YAP1 (Yap1) from Rattus norvegicus (Rat).